Here is a 278-residue protein sequence, read N- to C-terminus: Glycerophosphodiester phosphodiesterase GpdQ (278 aa).

Fe cation-binding residues include Asp8, His10, Asp50, Asn80, His156, His195, and His197.

This sequence belongs to the cyclic nucleotide phosphodiesterase class-III family. Fe(2+) serves as cofactor.

The catalysed reaction is a sn-glycero-3-phosphodiester + H2O = an alcohol + sn-glycerol 3-phosphate + H(+). The enzyme catalyses sn-glycero-3-phosphoethanolamine + H2O = ethanolamine + sn-glycerol 3-phosphate + H(+). In terms of biological role, catalyzes the hydrolysis of the 3'-5' phosphodiester bond of glycerophosphodiesters such as glycerophosphorylethanolamine (GPE), a typical phospholipid metabolite. This Enterobacter lignolyticus (strain SCF1) protein is Glycerophosphodiester phosphodiesterase GpdQ.